Reading from the N-terminus, the 41-residue chain is Large ribosomal subunit protein bL36B (41 aa).

Belongs to the bacterial ribosomal protein bL36 family.

The protein is Large ribosomal subunit protein bL36B of Vibrio campbellii (strain ATCC BAA-1116).